We begin with the raw amino-acid sequence, 672 residues long: Glycogen [starch] synthase (672 aa).

UDP-alpha-D-glucose is bound at residue Lys-56. Residues 645-672 (MRDNEGKVPSAATSRRPSIHSSDGEDDE) are disordered. Over residues 655–665 (AATSRRPSIHS) the composition is skewed to polar residues.

The protein belongs to the glycosyltransferase 3 family. Forms a hetero-octamer with each protomer of the gsy-1 homotetramer bound to one molecule of gyg-1. The N-terminus is involved in interprotomer contacts with gyg-1. The interaction with gyg-1 is required for glycogen production but is not required for gsy-1 intrinsic activity.

The catalysed reaction is [(1-&gt;4)-alpha-D-glucosyl](n) + UDP-alpha-D-glucose = [(1-&gt;4)-alpha-D-glucosyl](n+1) + UDP + H(+). It participates in glycan biosynthesis; glycogen biosynthesis. Transfers the glycosyl residue from UDP-Glc to the non-reducing end of alpha-1,4-glucan. The polypeptide is Glycogen [starch] synthase (Caenorhabditis elegans).